Consider the following 351-residue polypeptide: Fe-S cluster assembly protein DRE2 (351 aa).

The segment at 1–151 (MATTGRVLLL…KPDIGAQQAI (151 aa)) is N-terminal SAM-like domain. Disordered stretches follow at residues 93 to 118 (RNRENKPWGLSDGNGSNANSSRRYND) and 157 to 186 (RRRKEKEKTDTLASSANYSTNGTVGAPSSN). Polar residues-rich tracts occupy residues 105 to 114 (GNGSNANSSR) and 167 to 186 (TLASSANYSTNGTVGAPSSN). Residues 152–243 (PLKLSRRRKE…EDELLDEDDM (92 aa)) form a linker region. [2Fe-2S] cluster is bound by residues Cys253, Cys264, Cys267, and Cys269. The fe-S binding site A stretch occupies residues 253 to 269 (CRPKPGKRRRACKDCSC). Residues Cys314, Cys317, Cys325, and Cys328 each coordinate [4Fe-4S] cluster. 2 consecutive short sequence motifs (cx2C motif) follow at residues 314–317 (CGNC) and 325–328 (CDGC). Residues 314-328 (CGNCSLGDAFRCDGC) form a fe-S binding site B region.

This sequence belongs to the anamorsin family. In terms of assembly, monomer. Interacts with TAH18. Interacts with MIA40. [2Fe-2S] cluster serves as cofactor. The cofactor is [4Fe-4S] cluster.

It is found in the cytoplasm. The protein localises to the mitochondrion intermembrane space. Its function is as follows. Component of the cytosolic iron-sulfur (Fe-S) protein assembly (CIA) machinery required for the maturation of extramitochondrial Fe-S proteins. Part of an electron transfer chain functioning in an early step of cytosolic Fe-S biogenesis, facilitating the de novo assembly of a [4Fe-4S] cluster on the scaffold complex CFD1-NBP35. Electrons are transferred to DRE2 from NADPH via the FAD- and FMN-containing protein TAH18. TAH18-DRE2 are also required for the assembly of the diferric tyrosyl radical cofactor of ribonucleotide reductase (RNR), probably by providing electrons for reduction during radical cofactor maturation in the catalytic small subunit RNR2. The protein is Fe-S cluster assembly protein DRE2 of Ajellomyces capsulatus (strain NAm1 / WU24) (Darling's disease fungus).